Reading from the N-terminus, the 573-residue chain is Protein FAM200A (573 aa).

Positions 1-51 are disordered; it reads MTPESRDTTDLSPRGTQEMEGIVVVKVEEEDEEDHFQKQRNKVESSPQVLS. The Extracellular portion of the chain corresponds to 1 to 513; it reads MTPESRDTTD…DEFPLLSRKS (513 aa). The helical transmembrane segment at 514–533 threads the bilayer; the sequence is ISLLLPFTTTYLCELGFSIL. The Cytoplasmic segment spans residues 534–573; the sequence is TRLKTKKRNRLNSAPDMRVALSSCVPDWKELMNRQAHPSH.

Belongs to the FAM200 family.

Its subcellular location is the membrane. The polypeptide is Protein FAM200A (FAM200A) (Macaca fascicularis (Crab-eating macaque)).